The following is an 85-amino-acid chain: Probable oxaloacetate decarboxylase gamma chain (85 aa).

Residues 15-35 (ISGMGFVLLFLIVLIYAISFI) form a helical membrane-spanning segment.

It belongs to the OadG family. Heterotrimer of an alpha, a beta and a gamma subunit. The cofactor is Na(+).

It is found in the cell membrane. The catalysed reaction is oxaloacetate + 2 Na(+)(in) + H(+) = pyruvate + 2 Na(+)(out) + CO2. Functionally, catalyzes the decarboxylation of oxaloacetate coupled to Na(+) translocation. This Actinobacillus pleuropneumoniae serotype 5b (strain L20) protein is Probable oxaloacetate decarboxylase gamma chain.